Consider the following 274-residue polypeptide: MGTLTVNQNKLQKRLRRLAGEAVTDFNMIEDGDKVMVCLSGGKDSYTMLDVLMHLQKVAPIKFEIVAVNMDQKQPGFPEHVLPAYLKELGIEYHIVEKDTYSVVKELIPEGKTTCSLCSRLRRGTLYTFADEIGATKMALGHHRDDIVETFFLNMFFNGSLKAMPPKLRADDGRNVVIRPLAYCNEKDIQAYSDFKQFPIIPCNLCGSQENLQRQVVKEMLQDWERKTPGRTESIFRSLQNVIPSQLADRNLFDFTSLKIDETAASRFVNVVNL.

The PP-loop motif motif lies at Ser-40–Ser-45. [4Fe-4S] cluster is bound by residues Cys-115, Cys-118, and Cys-206.

This sequence belongs to the TtcA family. Homodimer. Mg(2+) is required as a cofactor. It depends on [4Fe-4S] cluster as a cofactor.

Its subcellular location is the cytoplasm. The enzyme catalyses cytidine(32) in tRNA + S-sulfanyl-L-cysteinyl-[cysteine desulfurase] + AH2 + ATP = 2-thiocytidine(32) in tRNA + L-cysteinyl-[cysteine desulfurase] + A + AMP + diphosphate + H(+). Its pathway is tRNA modification. Catalyzes the ATP-dependent 2-thiolation of cytidine in position 32 of tRNA, to form 2-thiocytidine (s(2)C32). The sulfur atoms are provided by the cysteine/cysteine desulfurase (IscS) system. The chain is tRNA-cytidine(32) 2-sulfurtransferase from Pseudomonas fluorescens (strain Pf0-1).